The chain runs to 922 residues: Autophagy-related protein 9B (922 aa).

Disordered regions lie at residues methionine 1 to proline 22 and threonine 85 to leucine 144. Topologically, residues methionine 1–glycine 206 are cytoplasmic. Positions threonine 85–glycine 114 are enriched in polar residues. Low complexity predominate over residues serine 115–alanine 124. Positions tyrosine 150–leucine 153 match the Tyrosine-based sorting signal motif. A helical transmembrane segment spans residues phenylalanine 207–phenylalanine 227. The Lumenal segment spans residues threonine 228–histidine 275. The chain crosses the membrane as a helical span at residues aspartate 276–leucine 296. Over arginine 297 to threonine 437 the chain is Cytoplasmic. An intramembrane segment occupies valine 438 to leucine 458. Residues histidine 459–arginine 523 are Cytoplasmic-facing. The chain crosses the membrane as a helical span at residues alanine 524–leucine 544. Over threonine 545–aspartate 550 the chain is Lumenal. The helical transmembrane segment at valine 551 to alanine 571 threads the bilayer. Residues arginine 572–alanine 624 lie on the Cytoplasmic side of the membrane. An intramembrane segment occupies valine 625–phenylalanine 645. Over arginine 646–histidine 922 the chain is Cytoplasmic. The segment at glutamate 848–histidine 922 is disordered. Composition is skewed to low complexity over residues serine 854–serine 870 and serine 877–proline 889. Residues arginine 890 to glutamine 899 show a composition bias toward polar residues.

It belongs to the ATG9 family. As to quaternary structure, homotrimer; forms a homotrimer with a central pore that forms a path between the two membrane leaflets. As to expression, expressed in heart, brain, and placenta and testis.

The protein resides in the preautophagosomal structure membrane. The catalysed reaction is a 1,2-diacyl-sn-glycero-3-phosphocholine(in) = a 1,2-diacyl-sn-glycero-3-phosphocholine(out). It carries out the reaction a 1,2-diacyl-sn-glycero-3-phospho-L-serine(in) = a 1,2-diacyl-sn-glycero-3-phospho-L-serine(out). The enzyme catalyses a 1,2-diacyl-sn-glycero-3-phosphoethanolamine(in) = a 1,2-diacyl-sn-glycero-3-phosphoethanolamine(out). Phospholipid scramblase involved in autophagy by mediating autophagosomal membrane expansion. Cycles between the preautophagosomal structure/phagophore assembly site (PAS) and the cytoplasmic vesicle pool and supplies membrane for the growing autophagosome. Lipid scramblase activity plays a key role in preautophagosomal structure/phagophore assembly by distributing the phospholipids that arrive through ATG2 (ATG2A or ATG2B) from the cytoplasmic to the luminal leaflet of the bilayer, thereby driving autophagosomal membrane expansion. In addition to autophagy, also plays a role in necrotic cell death. The sequence is that of Autophagy-related protein 9B from Mus musculus (Mouse).